An 870-amino-acid chain; its full sequence is Histidine biosynthesis trifunctional protein (870 aa).

The tract at residues 1–285 is phosphoribosyl-AMP cyclohydrolase; it reads METTLPLPFL…KFVVKQKGRF (285 aa). The tract at residues 286 to 367 is phosphoribosyl-ATP pyrophosphohydrolase; sequence CHLDQSGCFG…FYFALTRAVA (82 aa). Residues 368–870 form a histidinol dehydrogenase region; the sequence is AGVTLADIER…IRLEHMSKSN (503 aa). 2 residues coordinate Zn(2+): Q693 and H696. Catalysis depends on residues E762 and H763. Zn(2+) is bound by residues D796 and H855.

In the C-terminal section; belongs to the histidinol dehydrogenase family. Requires Zn(2+) as cofactor.

The enzyme catalyses 1-(5-phospho-beta-D-ribosyl)-5'-AMP + H2O = 1-(5-phospho-beta-D-ribosyl)-5-[(5-phospho-beta-D-ribosylamino)methylideneamino]imidazole-4-carboxamide. It carries out the reaction 1-(5-phospho-beta-D-ribosyl)-ATP + H2O = 1-(5-phospho-beta-D-ribosyl)-5'-AMP + diphosphate + H(+). It catalyses the reaction L-histidinol + 2 NAD(+) + H2O = L-histidine + 2 NADH + 3 H(+). It participates in amino-acid biosynthesis; L-histidine biosynthesis; L-histidine from 5-phospho-alpha-D-ribose 1-diphosphate: step 2/9. It functions in the pathway amino-acid biosynthesis; L-histidine biosynthesis; L-histidine from 5-phospho-alpha-D-ribose 1-diphosphate: step 3/9. Its pathway is amino-acid biosynthesis; L-histidine biosynthesis; L-histidine from 5-phospho-alpha-D-ribose 1-diphosphate: step 9/9. The chain is Histidine biosynthesis trifunctional protein (his-3) from Neurospora crassa (strain ATCC 24698 / 74-OR23-1A / CBS 708.71 / DSM 1257 / FGSC 987).